The following is a 201-amino-acid chain: Probable phosphopantothenoylcysteine decarboxylase (201 aa).

Residues 20–22 (GSV), 45–47 (SKS), 98–101 (SANT), and Ala-132 each bind FMN. Residues Asn-134 and 164 to 166 (KLA) each bind substrate. The Proton donor role is filled by Cys-167. Met-175 contacts substrate.

The protein belongs to the HFCD (homooligomeric flavin containing Cys decarboxylase) superfamily. As to quaternary structure, homotrimer. FMN serves as cofactor. As to expression, expressed in roots, shoots, leaves, flowers, developing siliques and seeds.

The catalysed reaction is N-[(R)-4-phosphopantothenoyl]-L-cysteine + H(+) = (R)-4'-phosphopantetheine + CO2. The protein operates within cofactor biosynthesis; coenzyme A biosynthesis; CoA from (R)-pantothenate: step 3/5. Involved in plant growth and salt and osmotic tolerance. Catalyzes the decarboxylation of 4'-phosphopantothenoylcysteine to 4'-phosphopantetheine, a key step in coenzyme A biosynthesis. The enzyme is also able to decarboxylate pantothenoylcysteine to pantothenoylcysteamine. The polypeptide is Probable phosphopantothenoylcysteine decarboxylase (HAL3B) (Arabidopsis thaliana (Mouse-ear cress)).